Here is a 226-residue protein sequence, read N- to C-terminus: Cytidylate kinase (226 aa).

Residue 11-19 (GPAGAGKST) coordinates ATP.

The protein belongs to the cytidylate kinase family. Type 1 subfamily.

Its subcellular location is the cytoplasm. It carries out the reaction CMP + ATP = CDP + ADP. The catalysed reaction is dCMP + ATP = dCDP + ADP. The chain is Cytidylate kinase from Pelotomaculum thermopropionicum (strain DSM 13744 / JCM 10971 / SI).